We begin with the raw amino-acid sequence, 545 residues long: Chaperonin GroEL (545 aa).

Residues 30–33 (TLGP), Lys-51, 87–91 (DGTTT), Gly-415, and Asp-495 each bind ATP.

It belongs to the chaperonin (HSP60) family. Forms a cylinder of 14 subunits composed of two heptameric rings stacked back-to-back. Interacts with the co-chaperonin GroES.

The protein resides in the cytoplasm. The catalysed reaction is ATP + H2O + a folded polypeptide = ADP + phosphate + an unfolded polypeptide.. In terms of biological role, together with its co-chaperonin GroES, plays an essential role in assisting protein folding. The GroEL-GroES system forms a nano-cage that allows encapsulation of the non-native substrate proteins and provides a physical environment optimized to promote and accelerate protein folding. In Yersinia pestis bv. Antiqua (strain Antiqua), this protein is Chaperonin GroEL.